A 609-amino-acid chain; its full sequence is Dihydroxy-acid dehydratase (609 aa).

D81 lines the Mg(2+) pocket. C122 lines the [2Fe-2S] cluster pocket. 2 residues coordinate Mg(2+): D123 and K124. Position 124 is an N6-carboxylysine (K124). Residue C195 participates in [2Fe-2S] cluster binding. Position 491 (E491) interacts with Mg(2+). S517 serves as the catalytic Proton acceptor.

Belongs to the IlvD/Edd family. In terms of assembly, homodimer. [2Fe-2S] cluster is required as a cofactor. It depends on Mg(2+) as a cofactor.

The catalysed reaction is (2R)-2,3-dihydroxy-3-methylbutanoate = 3-methyl-2-oxobutanoate + H2O. It carries out the reaction (2R,3R)-2,3-dihydroxy-3-methylpentanoate = (S)-3-methyl-2-oxopentanoate + H2O. The protein operates within amino-acid biosynthesis; L-isoleucine biosynthesis; L-isoleucine from 2-oxobutanoate: step 3/4. Its pathway is amino-acid biosynthesis; L-valine biosynthesis; L-valine from pyruvate: step 3/4. Functionally, functions in the biosynthesis of branched-chain amino acids. Catalyzes the dehydration of (2R,3R)-2,3-dihydroxy-3-methylpentanoate (2,3-dihydroxy-3-methylvalerate) into 2-oxo-3-methylpentanoate (2-oxo-3-methylvalerate) and of (2R)-2,3-dihydroxy-3-methylbutanoate (2,3-dihydroxyisovalerate) into 2-oxo-3-methylbutanoate (2-oxoisovalerate), the penultimate precursor to L-isoleucine and L-valine, respectively. This chain is Dihydroxy-acid dehydratase, found in Acinetobacter baumannii (strain ATCC 17978 / DSM 105126 / CIP 53.77 / LMG 1025 / NCDC KC755 / 5377).